Here is a 237-residue protein sequence, read N- to C-terminus: (5-formylfuran-3-yl)methyl phosphate synthase (237 aa).

The active-site Schiff-base intermediate with substrate is the lysine 29. Lysine 87 acts as the Proton acceptor in catalysis.

This sequence belongs to the MfnB family.

The catalysed reaction is 2 D-glyceraldehyde 3-phosphate = 4-(hydroxymethyl)-2-furancarboxaldehyde phosphate + phosphate + 2 H2O. It participates in cofactor biosynthesis; methanofuran biosynthesis. In terms of biological role, catalyzes the formation of 4-(hydroxymethyl)-2-furancarboxaldehyde phosphate (4-HFC-P) from two molecules of glyceraldehyde-3-P (GA-3-P). This is (5-formylfuran-3-yl)methyl phosphate synthase from Methanopyrus kandleri (strain AV19 / DSM 6324 / JCM 9639 / NBRC 100938).